Reading from the N-terminus, the 103-residue chain is Histone H4.2 (103 aa).

Residues 1–14 (MSGRGKGGKGLGKG) show a composition bias toward gly residues. A disordered region spans residues 1-20 (MSGRGKGGKGLGKGGAKRHR). Lysine 6 is subject to N6-acetyl-N6-methyllysine; alternate. 3 positions are modified to N6-methyllysine; alternate: lysine 6, lysine 9, and lysine 13. N6-acetyl-N6-methyllysine; alternate is present on lysine 13. A DNA-binding region spans residues 17–21 (KRHRK). Lysine 92 is subject to N6-glutaryllysine.

It belongs to the histone H4 family. As to quaternary structure, the nucleosome is a histone octamer containing two molecules each of H2A, H2B, H3 and H4 assembled in one H3-H4 heterotetramer and two H2A-H2B heterodimers. The octamer wraps approximately 147 bp of DNA. In terms of processing, glutarylation at Lys-92 (H4K91glu) destabilizes nucleosomes by promoting dissociation of the H2A-H2B dimers from nucleosomes.

It is found in the nucleus. The protein localises to the chromosome. In terms of biological role, core component of nucleosome. Nucleosomes wrap and compact DNA into chromatin, limiting DNA accessibility to the cellular machineries which require DNA as a template. Histones thereby play a central role in transcription regulation, DNA repair, DNA replication and chromosomal stability. DNA accessibility is regulated via a complex set of post-translational modifications of histones, also called histone code, and nucleosome remodeling. This Emericella nidulans (strain FGSC A4 / ATCC 38163 / CBS 112.46 / NRRL 194 / M139) (Aspergillus nidulans) protein is Histone H4.2 (hhfB).